The chain runs to 885 residues: Aconitate hydratase A (885 aa).

[4Fe-4S] cluster-binding residues include C425, C491, and C494.

It belongs to the aconitase/IPM isomerase family. As to quaternary structure, monomer. [4Fe-4S] cluster is required as a cofactor.

It carries out the reaction citrate = D-threo-isocitrate. It catalyses the reaction (2S,3R)-3-hydroxybutane-1,2,3-tricarboxylate = 2-methyl-cis-aconitate + H2O. Its pathway is carbohydrate metabolism; tricarboxylic acid cycle; isocitrate from oxaloacetate: step 2/2. The protein operates within organic acid metabolism; propanoate degradation. Involved in the catabolism of short chain fatty acids (SCFA) via the tricarboxylic acid (TCA)(acetyl degradation route) and probably the 2-methylcitrate cycle I (propionate degradation route). Catalyzes the reversible isomerization of citrate to isocitrate via cis-aconitate. Could catalyze the hydration of 2-methyl-cis-aconitate to yield (2R,3S)-2-methylisocitrate. The apo form of AcnA functions as a RNA-binding regulatory protein. This chain is Aconitate hydratase A (acnA), found in Rickettsia bellii (strain RML369-C).